Reading from the N-terminus, the 611-residue chain is Rop guanine nucleotide exchange factor 5 (611 aa).

A disordered region spans residues 1–62 (MENLVKSCAG…PPPPPSQILG (62 aa)). Over residues 34 to 51 (STSGASYESSSTTTVASS) the composition is skewed to low complexity. The region spanning 93–477 (FKAKEMNSAD…DLTKQSDDNN (385 aa)) is the PRONE domain. Disordered stretches follow at residues 513 to 541 (TTPG…TNKI) and 588 to 611 (DVEE…YTVS). Positions 525 to 541 (KKGERRTPYSSKDTNKI) are enriched in basic and acidic residues.

Guanine-nucleotide exchange factor (GEF) that acts as an activator of Rop (Rho of plants) GTPases by promoting the exchange of GDP for GTP. The chain is Rop guanine nucleotide exchange factor 5 (ROPGEF5) from Arabidopsis thaliana (Mouse-ear cress).